The following is a 243-amino-acid chain: MDPSAALHRRPAGGSLGAVSPALSGGQARRRKQPPRPADFKLQVIIIGSRGVGKTSLMERFTDDTFCEACKSTVGVDFKIKTVELRGKKIRLQIWDTAGQERFNSITSAYYRSAKGIILVYDITKKETFDDLPKWMKMIDKYASEDAELLLVGNKLDCETDREISRQQGEKFAQQITGMRFCEASAKDNFNVDEIFLKLVDDILKKMPLDVLRNELSNSILSLQPEPEIPPELPPPRPHVRCC.

Residue M1 is modified to N-acetylmethionine. Positions 1–36 (MDPSAALHRRPAGGSLGAVSPALSGGQARRRKQPPR) are disordered. Phosphoserine is present on residues S15, S20, and S24. Residues G51, V52, G53, K54, T55, S72, and T73 each contribute to the GTP site. T55 provides a ligand contact to Mg(2+). 2 short sequence motifs (switch) span residues 64–78 (DTFC…GVDF) and 96–113 (DTAG…YYRS). Mg(2+) contacts are provided by T73 and D96. Position 99 (G99) interacts with GTP. Residue S105 is modified to Phosphoserine; by LRRK2. GTP is bound by residues N154, K155, D157, S185, A186, and K187. Residues C242 and C243 are each lipidated (S-geranylgeranyl cysteine).

This sequence belongs to the small GTPase superfamily. Rab family. As to quaternary structure, interacts with RABIF and OPTN. Interacts with LRRK2; interaction facilitates phosphorylation of Ser-105. Interacts with GDI1, GDI2, CHM and CHML; these interactions are disrupted by phosphorylation on Ser-105. Interacts with RILPL1 and RILPL2; these interactions are dependent on phosphorylation of Ser-105. Mg(2+) is required as a cofactor. In terms of processing, phosphorylation of Ser-105 in the switch II region by LRRK2 prevents the association of RAB regulatory proteins, including CHM, CHML and RAB GDP dissociation inhibitors GDI1 and GDI2. As to expression, ubiquitously expressed.

Its subcellular location is the recycling endosome membrane. It is found in the lysosome membrane. The protein localises to the golgi apparatus membrane. The protein resides in the cytoplasmic vesicle. It localises to the autophagosome. It catalyses the reaction GTP + H2O = GDP + phosphate + H(+). Regulated by guanine nucleotide exchange factors (GEFs) including DENND3 which promote the exchange of bound GDP for free GTP. Regulated by GTPase activating proteins (GAPs) which increase the GTP hydrolysis activity. Inhibited by GDP dissociation inhibitors (GDIs). Functionally, the small GTPases Rab are key regulators of intracellular membrane trafficking, from the formation of transport vesicles to their fusion with membranes. Rabs cycle between an inactive GDP-bound form and an active GTP-bound form that is able to recruit to membranes different set of downstream effectors directly responsible for vesicle formation, movement, tethering and fusion. RAB12 may play a role in protein transport from recycling endosomes to lysosomes regulating, for instance, the degradation of the transferrin receptor. Involved in autophagy. The chain is Ras-related protein Rab-12 from Mus musculus (Mouse).